The chain runs to 947 residues: Bifunctional glutamine synthetase adenylyltransferase/adenylyl-removing enzyme (947 aa).

Positions 1–440 (MTPLSSPLSQ…VFNELIGDDE (440 aa)) are adenylyl removase. An adenylyl transferase region spans residues 450–947 (SEPWREVWQD…ASWRKWLVAV (498 aa)).

Belongs to the GlnE family. The cofactor is Mg(2+).

The enzyme catalyses [glutamine synthetase]-O(4)-(5'-adenylyl)-L-tyrosine + phosphate = [glutamine synthetase]-L-tyrosine + ADP. It carries out the reaction [glutamine synthetase]-L-tyrosine + ATP = [glutamine synthetase]-O(4)-(5'-adenylyl)-L-tyrosine + diphosphate. Functionally, involved in the regulation of glutamine synthetase GlnA, a key enzyme in the process to assimilate ammonia. When cellular nitrogen levels are high, the C-terminal adenylyl transferase (AT) inactivates GlnA by covalent transfer of an adenylyl group from ATP to specific tyrosine residue of GlnA, thus reducing its activity. Conversely, when nitrogen levels are low, the N-terminal adenylyl removase (AR) activates GlnA by removing the adenylyl group by phosphorolysis, increasing its activity. The regulatory region of GlnE binds the signal transduction protein PII (GlnB) which indicates the nitrogen status of the cell. The polypeptide is Bifunctional glutamine synthetase adenylyltransferase/adenylyl-removing enzyme (Salmonella agona (strain SL483)).